Consider the following 624-residue polypeptide: DNA mismatch repair protein MutL (624 aa).

The protein belongs to the DNA mismatch repair MutL/HexB family.

This protein is involved in the repair of mismatches in DNA. It is required for dam-dependent methyl-directed DNA mismatch repair. May act as a 'molecular matchmaker', a protein that promotes the formation of a stable complex between two or more DNA-binding proteins in an ATP-dependent manner without itself being part of a final effector complex. In Chlorobium phaeobacteroides (strain DSM 266 / SMG 266 / 2430), this protein is DNA mismatch repair protein MutL.